A 323-amino-acid chain; its full sequence is AA9 family lytic polysaccharide monooxygenase B (323 aa).

Residues methionine 1–alanine 18 form the signal peptide. Residues histidine 19 and histidine 97 each coordinate Cu(2+). The cysteines at positions 56 and 191 are disulfide-linked. O2-binding residues include histidine 177 and glutamine 186. Tyrosine 188 provides a ligand contact to Cu(2+). The CBM1 domain maps to cysteine 286 to valine 323.

The protein belongs to the polysaccharide monooxygenase AA9 family. It depends on Cu(2+) as a cofactor.

The protein resides in the secreted. It carries out the reaction [(1-&gt;4)-beta-D-glucosyl]n+m + reduced acceptor + O2 = 4-dehydro-beta-D-glucosyl-[(1-&gt;4)-beta-D-glucosyl]n-1 + [(1-&gt;4)-beta-D-glucosyl]m + acceptor + H2O.. With respect to regulation, is able to utilize various natural phenolic compounds as reducing agents. Most of these reducing agents are present in plants, either free or as lignin building blocks, such as sinapic acid, or as flavonoids such as catechin and dopamine. Phenolic compounds with 1,2-benzenediol and 1,2,3-benzenetriol moieties yield the highest release of oxidized and non-oxidized glucooligosaccharides from cellulose compared to monophenols or sulfur-containing compounds. Functionally, lytic polysaccharide monooxygenase (LPMO) that depolymerizes crystalline and amorphous polysaccharides via the oxidation of scissile alpha- or beta-(1-4)-glycosidic bonds, yielding C1 oxidation products. Catalysis by LPMOs requires the reduction of the active-site copper from Cu(II) to Cu(I) by a reducing agent and H(2)O(2) or O(2) as a cosubstrate. Is active on regenerated amorphous cellulose (RAC). In Thermothelomyces thermophilus (strain ATCC 42464 / BCRC 31852 / DSM 1799) (Sporotrichum thermophile), this protein is AA9 family lytic polysaccharide monooxygenase B.